Here is a 454-residue protein sequence, read N- to C-terminus: Serine--tRNA ligase (454 aa).

247–249 (TAE) serves as a coordination point for L-serine. Residues 278 to 280 (RKE) and valine 294 each bind ATP. Glutamate 301 contributes to the L-serine binding site. 365 to 368 (ELAS) provides a ligand contact to ATP. Threonine 400 is a binding site for L-serine.

Belongs to the class-II aminoacyl-tRNA synthetase family. Type-1 seryl-tRNA synthetase subfamily. As to quaternary structure, homodimer. The tRNA molecule binds across the dimer.

It is found in the cytoplasm. It catalyses the reaction tRNA(Ser) + L-serine + ATP = L-seryl-tRNA(Ser) + AMP + diphosphate + H(+). The catalysed reaction is tRNA(Sec) + L-serine + ATP = L-seryl-tRNA(Sec) + AMP + diphosphate + H(+). The protein operates within aminoacyl-tRNA biosynthesis; selenocysteinyl-tRNA(Sec) biosynthesis; L-seryl-tRNA(Sec) from L-serine and tRNA(Sec): step 1/1. Catalyzes the attachment of serine to tRNA(Ser). Is also able to aminoacylate tRNA(Sec) with serine, to form the misacylated tRNA L-seryl-tRNA(Sec), which will be further converted into selenocysteinyl-tRNA(Sec). The protein is Serine--tRNA ligase of Pyrobaculum calidifontis (strain DSM 21063 / JCM 11548 / VA1).